Reading from the N-terminus, the 396-residue chain is L-lactate dehydrogenase (396 aa).

The region spanning 1–380 is the FMN hydroxy acid dehydrogenase domain; the sequence is MIISAASDYR…TQDSLVQGLG (380 aa). A substrate-binding site is contributed by Y24. FMN-binding residues include S106 and Q127. Residue Y129 participates in substrate binding. Position 155 (T155) interacts with FMN. R164 serves as a coordination point for substrate. K251 contacts FMN. The active-site Proton acceptor is the H275. R278 lines the substrate pocket. 306–330 contributes to the FMN binding site; sequence DSGIRNGLDVVRMIALGADTVLLGR.

It belongs to the FMN-dependent alpha-hydroxy acid dehydrogenase family. FMN serves as cofactor.

The protein localises to the cell inner membrane. The enzyme catalyses (S)-lactate + A = pyruvate + AH2. In terms of biological role, catalyzes the conversion of L-lactate to pyruvate. Is coupled to the respiratory chain. The chain is L-lactate dehydrogenase from Shigella boydii serotype 18 (strain CDC 3083-94 / BS512).